Reading from the N-terminus, the 128-residue chain is Large ribosomal subunit protein bL17 (128 aa).

The protein belongs to the bacterial ribosomal protein bL17 family. Part of the 50S ribosomal subunit. Contacts protein L32.

The protein is Large ribosomal subunit protein bL17 of Streptococcus pneumoniae serotype 2 (strain D39 / NCTC 7466).